We begin with the raw amino-acid sequence, 299 residues long: 33 kDa chaperonin (299 aa).

Disulfide bonds link cysteine 234–cysteine 236 and cysteine 268–cysteine 271.

The protein belongs to the HSP33 family. In terms of processing, under oxidizing conditions two disulfide bonds are formed involving the reactive cysteines. Under reducing conditions zinc is bound to the reactive cysteines and the protein is inactive.

The protein localises to the cytoplasm. In terms of biological role, redox regulated molecular chaperone. Protects both thermally unfolding and oxidatively damaged proteins from irreversible aggregation. Plays an important role in the bacterial defense system toward oxidative stress. In Pseudomonas putida (strain GB-1), this protein is 33 kDa chaperonin.